The sequence spans 403 residues: Phosphoglycerate kinase (403 aa).

Substrate contacts are provided by residues 21 to 23 (DFN), R36, 59 to 62 (HLGR), R119, and R154. ATP contacts are provided by residues K207, G299, E330, and 357-360 (GGDA).

Belongs to the phosphoglycerate kinase family. Monomer.

The protein localises to the cytoplasm. The enzyme catalyses (2R)-3-phosphoglycerate + ATP = (2R)-3-phospho-glyceroyl phosphate + ADP. It participates in carbohydrate degradation; glycolysis; pyruvate from D-glyceraldehyde 3-phosphate: step 2/5. The sequence is that of Phosphoglycerate kinase from Chlamydia caviae (strain ATCC VR-813 / DSM 19441 / 03DC25 / GPIC) (Chlamydophila caviae).